Reading from the N-terminus, the 867-residue chain is Respiratory burst oxidase homolog protein B (867 aa).

A compositionally biased stretch (basic and acidic residues) spans 1 to 13 (MEIENTRDSDSMR). The segment at 1-20 (MEIENTRDSDSMRGSRVGFS) is disordered. Topologically, residues 1 to 322 (MEIENTRDSD…DYFIEDNWKR (322 aa)) are cytoplasmic. 2 positions are modified to phosphoserine; by CPK: serine 82 and serine 97. EF-hand-like regions lie at residues 141 to 149 (AVNGMLTKS) and 175 to 186 (RCITSPAVTKDE). 2 consecutive EF-hand domains span residues 198–233 (SFDA…SASA) and 242–277 (NSDE…APSH). 5 residues coordinate Ca(2+): aspartate 211, aspartate 213, aspartate 215, arginine 217, and glutamate 222. The chain crosses the membrane as a helical span at residues 323-343 (IWVMALWLSICAGLFTWKFIQ). Residues 344-358 (YKRRAVFDVMGYCVS) lie on the Extracellular side of the membrane. A helical transmembrane segment spans residues 359–379 (VAKGGAETTKFNMALVLLPVC). Positions 361–519 (KGGAETTKFN…LFVIVYVLFI (159 aa)) constitute a Ferric oxidoreductase domain. Residues 380–407 (RNTITWLRSRTKLGKIIPFDDNINFHKV) are Cytoplasmic-facing. A helical membrane pass occupies residues 408–428 (IAFGIAVGVGLHAISHLTCDF). Residues 429-463 (PRLLHATDEEYEPMKPFFGDERPNNYWWFVKGTEG) are Extracellular-facing. The chain crosses the membrane as a helical span at residues 464–484 (WTGVVMVVLMIIAYVLAQPWF). The Cytoplasmic portion of the chain corresponds to 485–506 (RRNRLNLPSTIKKLTGFNAFWY). The chain crosses the membrane as a helical span at residues 507–527 (SHHLFVIVYVLFIIHGYFLYL). Residues 528–686 (SKKWYKKTTW…APAQDYKKYD (159 aa)) are Extracellular-facing. Residues 558–681 (SGYKAVKILK…DGPYGAPAQD (124 aa)) form the FAD-binding FR-type domain. Residues 687-707 (VVLLVGLGIGATPLISIVKDV) form a helical membrane-spanning segment. Topologically, residues 708–867 (LNNIKQQKNI…TKFEFHKENF (160 aa)) are cytoplasmic.

This sequence belongs to the RBOH (TC 5.B.1.3) family. In terms of assembly, monomer and homodimer. Post-translationally, phosphorylation at Ser-82 and Ser-97 is required for full activity of RBOHB. Not phosphorylated at Ser-89. Phosphorylation at Ser-82 is induced by fungal elicitor treatment.

The protein localises to the cell membrane. Inhibited by diphenylene iodinium (DPI). In terms of biological role, calcium-dependent NADPH oxidase that generates superoxide. Involved in the massive phase II oxidative burst induced by pathogen infection. The chain is Respiratory burst oxidase homolog protein B (RBOHB) from Solanum tuberosum (Potato).